A 194-amino-acid chain; its full sequence is MGEVKAGGPSTRVMEGSEHGFATTRVDALLNWAKKYSLFQYPFVTACCGMEYMAMASPRFDMARFGAEVPRFSPRQADLLWVVGTISQRQAPALKRIYEQMADPKWVLAFGTCASCGGFYDNYTTVAGIDKVIPCDVYVPGCPPRPEAVLDGLMLLQDKIARGDRTPAIVKPREDPAQTTEHLVTLQRKERSLP.

4 residues coordinate [4Fe-4S] cluster: C47, C48, C113, and C142.

Belongs to the complex I 20 kDa subunit family. As to quaternary structure, NDH-1 is composed of 14 different subunits. Subunits NuoB, C, D, E, F, and G constitute the peripheral sector of the complex. [4Fe-4S] cluster is required as a cofactor.

The protein resides in the cell inner membrane. The catalysed reaction is a quinone + NADH + 5 H(+)(in) = a quinol + NAD(+) + 4 H(+)(out). In terms of biological role, NDH-1 shuttles electrons from NADH, via FMN and iron-sulfur (Fe-S) centers, to quinones in the respiratory chain. The immediate electron acceptor for the enzyme in this species is believed to be ubiquinone. Couples the redox reaction to proton translocation (for every two electrons transferred, four hydrogen ions are translocated across the cytoplasmic membrane), and thus conserves the redox energy in a proton gradient. The sequence is that of NADH-quinone oxidoreductase subunit B 1 from Sorangium cellulosum (strain So ce56) (Polyangium cellulosum (strain So ce56)).